Consider the following 266-residue polypeptide: Putative [LysW]-aminoadipate/[LysW]-glutamate kinase (266 aa).

Substrate is bound by residues 36–37 (GG), R63, and N168.

The protein belongs to the acetylglutamate kinase family. LysZ subfamily.

Its subcellular location is the cytoplasm. It catalyses the reaction [amino-group carrier protein]-C-terminal-N-(1,4-dicarboxybutan-1-yl)-L-glutamine + ATP = [amino-group carrier protein]-C-terminal-N-(1-carboxy-5-phosphooxy-5-oxopentan-1-yl)-L-glutamine + ADP. It carries out the reaction [amino-group carrier protein]-C-terminal-gamma-(L-glutamyl)-L-glutamate + ATP = [amino-group carrier protein]-C-terminal-gamma-(5-phospho-L-glutamyl)-L-glutamate + ADP. It functions in the pathway amino-acid biosynthesis; L-lysine biosynthesis via AAA pathway; L-lysine from L-alpha-aminoadipate (Thermus route): step 2/5. The protein operates within amino-acid biosynthesis; L-arginine biosynthesis. In terms of biological role, involved in both the arginine and lysine biosynthetic pathways. Phosphorylates the LysW-bound precursors glutamate (for arginine biosynthesis), respectively alpha-aminoadipate (for lysine biosynthesis). This chain is Putative [LysW]-aminoadipate/[LysW]-glutamate kinase, found in Cenarchaeum symbiosum (strain A).